Reading from the N-terminus, the 122-residue chain is Defensin-like protein 181 (122 aa).

The N-terminal stretch at M1 to A26 is a signal peptide. Intrachain disulfides connect C29-C70, C36-C55, C39-C64, C43-C66, C76-C122, C87-C107, C92-C116, and C96-C118.

Belongs to the DEFL family.

The protein resides in the secreted. Confers broad-spectrum resistance to pathogens. This chain is Defensin-like protein 181 (PDF3.1), found in Arabidopsis thaliana (Mouse-ear cress).